We begin with the raw amino-acid sequence, 251 residues long: Ubiquinone/menaquinone biosynthesis C-methyltransferase UbiE (251 aa).

S-adenosyl-L-methionine contacts are provided by residues Thr74, Asp95, and 123–124 (NA).

This sequence belongs to the class I-like SAM-binding methyltransferase superfamily. MenG/UbiE family.

It carries out the reaction a 2-demethylmenaquinol + S-adenosyl-L-methionine = a menaquinol + S-adenosyl-L-homocysteine + H(+). The enzyme catalyses a 2-methoxy-6-(all-trans-polyprenyl)benzene-1,4-diol + S-adenosyl-L-methionine = a 5-methoxy-2-methyl-3-(all-trans-polyprenyl)benzene-1,4-diol + S-adenosyl-L-homocysteine + H(+). Its pathway is quinol/quinone metabolism; menaquinone biosynthesis; menaquinol from 1,4-dihydroxy-2-naphthoate: step 2/2. It functions in the pathway cofactor biosynthesis; ubiquinone biosynthesis. Functionally, methyltransferase required for the conversion of demethylmenaquinol (DMKH2) to menaquinol (MKH2) and the conversion of 2-polyprenyl-6-methoxy-1,4-benzoquinol (DDMQH2) to 2-polyprenyl-3-methyl-6-methoxy-1,4-benzoquinol (DMQH2). The polypeptide is Ubiquinone/menaquinone biosynthesis C-methyltransferase UbiE (Edwardsiella ictaluri (strain 93-146)).